The primary structure comprises 768 residues: Gephyrin (768 aa).

An MPT Mo-transferase region spans residues 14–166; sequence QIRVGVLTVS…LPGSKKGSQE (153 aa). The tract at residues 153-348 is interaction with GABARAP; it reads LIINLPGSKK…VDITKVARRH (196 aa). Disordered regions lie at residues 194 to 245 and 273 to 316; these read DELE…DSSS and TASL…ASRV. A compositionally biased stretch (pro residues) spans 200 to 212; that stretch reads PSPPPPLSPPPTT. 2 positions are modified to phosphoserine: Ser201 and Ser207. A Phosphothreonine modification is found at Thr211. Position 213 is a phosphoserine (Ser213). Cys225 is lipidated: S-palmitoyl cysteine. Polar residues predominate over residues 274–299; that stretch reads ASLSTTPSESPRAQATSRLSTASCPT. Ser275 is modified (phosphoserine). A phosphothreonine mark is found at Thr278 and Thr279. A phosphoserine mark is found at Ser281 and Ser283. Cys297 is lipidated: S-palmitoyl cysteine. Residues 326-768 are MPT adenylyltransferase; that stretch reads SSKENILRAS…VVDVMVIGRL (443 aa). Residue Ser337 is modified to Phosphoserine.

In the N-terminal section; belongs to the MoaB/Mog family. The protein in the C-terminal section; belongs to the MoeA family. As to quaternary structure, homotrimer, homodimer and homooligomer. Interacts with SRGAP2 (via SH3 domain). Interacts with GLRB. Interacts with GABARAP. Interacts with GABRA3. GABRA3 and GLRB occupy overlapping binding sites. Interacts with ARHGAP32; IQSEC3, INSYN1 and INSYN2A. Requires Mg(2+) as cofactor. Post-translationally, phosphorylated. Palmitoylated. Palmitoylation is stimulated by GABA type A receptors activity. Palmitoylation by ZDHHC12 regulates clustering at synapses. Expressed in tissues including spinal cord, brain, liver, kidney and lung.

It is found in the postsynaptic cell membrane. It localises to the cell membrane. The protein localises to the cytoplasm. Its subcellular location is the cytosol. The protein resides in the cytoskeleton. It is found in the cell projection. It localises to the dendrite. The protein localises to the postsynaptic density. It catalyses the reaction molybdopterin + ATP + H(+) = adenylyl-molybdopterin + diphosphate. It carries out the reaction adenylyl-molybdopterin + molybdate = Mo-molybdopterin + AMP + H(+). It functions in the pathway cofactor biosynthesis; molybdopterin biosynthesis. Its activity is regulated as follows. Inhibited by copper and tungsten. In terms of biological role, microtubule-associated protein involved in membrane protein-cytoskeleton interactions. It is thought to anchor the inhibitory glycine receptor (GLYR) to subsynaptic microtubules. Acts as a major instructive molecule at inhibitory synapses, where it also clusters GABA type A receptors. Its function is as follows. Also has a catalytic activity and catalyzes two steps in the biosynthesis of the molybdenum cofactor. In the first step, molybdopterin is adenylated. Subsequently, molybdate is inserted into adenylated molybdopterin and AMP is released. This Rattus norvegicus (Rat) protein is Gephyrin (Gphn).